A 137-amino-acid chain; its full sequence is Small ribosomal subunit protein uS11 (137 aa).

Disordered regions lie at residues 1–32 (MPPK…AHIK) and 118–137 (ISDV…RRRV). The segment covering 12–21 (KTQKSRRRDK) has biased composition (basic residues).

This sequence belongs to the universal ribosomal protein uS11 family. Part of the 30S ribosomal subunit. Interacts with proteins S7 and S18. Binds to IF-3.

Functionally, located on the platform of the 30S subunit, it bridges several disparate RNA helices of the 16S rRNA. Forms part of the Shine-Dalgarno cleft in the 70S ribosome. This is Small ribosomal subunit protein uS11 from Nocardia farcinica (strain IFM 10152).